We begin with the raw amino-acid sequence, 182 residues long: MKKHLLFLGPPGAGKGTQAAYLSEANSYLHLSTGELLRKEIDLDTYLGKQVKDIMNKGELVSDQLVLEIVNKNLSKDNKGWILDGYPRNLSQVNSLNEVLMNINQPLEIVFYLDVPDEVLIKRLLLRGRKDDNEETIKTRLKIYKETTEPLIEYYKNLSLLEYINADGDLKTISNDIKQKMA.

12–17 is a binding site for ATP; that stretch reads GAGKGT. The NMP stretch occupies residues 32–61; that stretch reads STGELLRKEIDLDTYLGKQVKDIMNKGELV. AMP contacts are provided by residues threonine 33, arginine 38, 59–61, 85–88, and glutamine 92; these read ELV and GYPR. Positions 126–132 are LID; the sequence is LRGRKDD. Arginine 127 contacts ATP. Residues arginine 129 and arginine 140 each coordinate AMP. Glycine 168 serves as a coordination point for ATP.

This sequence belongs to the adenylate kinase family. In terms of assembly, monomer.

It localises to the cytoplasm. It carries out the reaction AMP + ATP = 2 ADP. The protein operates within purine metabolism; AMP biosynthesis via salvage pathway; AMP from ADP: step 1/1. Functionally, catalyzes the reversible transfer of the terminal phosphate group between ATP and AMP. Plays an important role in cellular energy homeostasis and in adenine nucleotide metabolism. The polypeptide is Adenylate kinase (Prochlorococcus marinus (strain MIT 9515)).